The chain runs to 231 residues: Large ribosomal subunit protein uL1 (231 aa).

The protein belongs to the universal ribosomal protein uL1 family. In terms of assembly, part of the 50S ribosomal subunit.

Functionally, binds directly to 23S rRNA. The L1 stalk is quite mobile in the ribosome, and is involved in E site tRNA release. Its function is as follows. Protein L1 is also a translational repressor protein, it controls the translation of the L11 operon by binding to its mRNA. This Acidovorax ebreus (strain TPSY) (Diaphorobacter sp. (strain TPSY)) protein is Large ribosomal subunit protein uL1.